We begin with the raw amino-acid sequence, 164 residues long: uncharacterized protein (164 aa).

An N-terminal signal peptide occupies residues 1 to 25 (MMKTVKHLLCCAIAASALISTGVHA).

This is an uncharacterized protein from Escherichia coli (strain K12).